The following is a 414-amino-acid chain: UDP-N-acetylmuramoylalanine--D-glutamate ligase (414 aa).

104 to 110 is an ATP binding site; the sequence is GSNGKST.

The protein belongs to the MurCDEF family.

The protein localises to the cytoplasm. It carries out the reaction UDP-N-acetyl-alpha-D-muramoyl-L-alanine + D-glutamate + ATP = UDP-N-acetyl-alpha-D-muramoyl-L-alanyl-D-glutamate + ADP + phosphate + H(+). It participates in cell wall biogenesis; peptidoglycan biosynthesis. In terms of biological role, cell wall formation. Catalyzes the addition of glutamate to the nucleotide precursor UDP-N-acetylmuramoyl-L-alanine (UMA). The sequence is that of UDP-N-acetylmuramoylalanine--D-glutamate ligase from Francisella philomiragia subsp. philomiragia (strain ATCC 25017 / CCUG 19701 / FSC 153 / O#319-036).